Here is a 363-residue protein sequence, read N- to C-terminus: tRNA N6-adenosine threonylcarbamoyltransferase (363 aa).

2 residues coordinate Fe cation: H121 and H125. Substrate contacts are provided by residues 143–147 (LASGG), D176, G189, and N287. Position 315 (D315) interacts with Fe cation.

This sequence belongs to the KAE1 / TsaD family. The cofactor is Fe(2+).

The protein resides in the cytoplasm. The catalysed reaction is L-threonylcarbamoyladenylate + adenosine(37) in tRNA = N(6)-L-threonylcarbamoyladenosine(37) in tRNA + AMP + H(+). Functionally, required for the formation of a threonylcarbamoyl group on adenosine at position 37 (t(6)A37) in tRNAs that read codons beginning with adenine. Is involved in the transfer of the threonylcarbamoyl moiety of threonylcarbamoyl-AMP (TC-AMP) to the N6 group of A37, together with TsaE and TsaB. TsaD likely plays a direct catalytic role in this reaction. The protein is tRNA N6-adenosine threonylcarbamoyltransferase of Rhodopseudomonas palustris (strain TIE-1).